The chain runs to 223 residues: MKFVPCLLLVTLSCLGTLGQAPRQKQGSTGEEFHFQTGGRDSCTMRPSSLGQGAGEVWLRVDCRNTDQTYWCEYRGQPSMCQAFAADPKPYWNQALQELRRLHHACQGAPVLRPSVCREAGPQAHMQQVTSSLKGSPEPNQQPEAGTPSLRPKATVKLTEATQLGKDSMEELGKAKPTTRPTAKPTQPGPRPGGNEEAKKKAWEHCWKPFQALCAFLISFFRG.

The first 19 residues, Met1–Gly19, serve as a signal peptide directing secretion. Residues Arg23–Met45 form a disordered region. Intrachain disulfides connect Cys43-Cys63, Cys72-Cys106, and Cys81-Cys117. A disordered region spans residues Ala120 to Lys201. Polar residues predominate over residues His125–Glu144. Residues Ala175–Thr186 show a composition bias toward low complexity. Cys206 and Cys214 are disulfide-bonded.

Belongs to the fibroblast growth factor-binding protein family. In terms of tissue distribution, expressed in serum, peripheral leukocytes and cytotoxic T-lymphocytes, but not in granulocytes and monocytes (at protein level).

Its subcellular location is the secreted. The protein localises to the extracellular space. The sequence is that of Fibroblast growth factor-binding protein 2 (FGFBP2) from Homo sapiens (Human).